Reading from the N-terminus, the 347-residue chain is tRNA N6-adenosine threonylcarbamoyltransferase (347 aa).

Fe cation is bound by residues His113 and His117. Substrate contacts are provided by residues 136-140 (IVSGG), Asp170, Gly183, Asp187, and Asn282. Asp310 provides a ligand contact to Fe cation.

Belongs to the KAE1 / TsaD family. Requires Fe(2+) as cofactor.

It is found in the cytoplasm. The catalysed reaction is L-threonylcarbamoyladenylate + adenosine(37) in tRNA = N(6)-L-threonylcarbamoyladenosine(37) in tRNA + AMP + H(+). Its function is as follows. Required for the formation of a threonylcarbamoyl group on adenosine at position 37 (t(6)A37) in tRNAs that read codons beginning with adenine. Is involved in the transfer of the threonylcarbamoyl moiety of threonylcarbamoyl-AMP (TC-AMP) to the N6 group of A37, together with TsaE and TsaB. TsaD likely plays a direct catalytic role in this reaction. This chain is tRNA N6-adenosine threonylcarbamoyltransferase, found in Bifidobacterium adolescentis (strain ATCC 15703 / DSM 20083 / NCTC 11814 / E194a).